The following is a 164-amino-acid chain: MTKKDKKAKGPKMSTITTKSGESLKVFEDLHDFETYLKGETEDQEFDHVHCQLKYYPPFVLHDAHDDPEKIKETANSHSKKFVRHLHQHVEKHLLKDIKTAINKPELKFHDKKKQESFDRIVWNYGEETELNAKKFKVSVEVVCKHDGAMVDVDYRTEPLQPLI.

Belongs to the RGI1 family.

The protein localises to the cytoplasm. Involved in the control of energetic metabolism and significantly contribute to cell fitness, especially under respiratory growth conditions. In Saccharomyces cerevisiae (strain RM11-1a) (Baker's yeast), this protein is Respiratory growth induced protein 2 (RGI2).